Here is a 485-residue protein sequence, read N- to C-terminus: Membrane-bound lytic murein transglycosylase F (485 aa).

Residues 1–29 (MFAHTALRQRCAKWLFATGLFLLLGACVE) form the signal peptide. Residues 30 to 267 (KPSTLERVKE…RLKDRYYGHV (238 aa)) are non-LT domain. Positions 268–485 (DVLGYVGAYT…DKPAEQSPPM (218 aa)) are LT domain. Residue Glu314 is part of the active site. The tract at residues 465–485 (EGNLHVPGVNKDKPAEQSPPM) is disordered.

The protein in the N-terminal section; belongs to the bacterial solute-binding protein 3 family. This sequence in the C-terminal section; belongs to the transglycosylase Slt family.

It is found in the cell outer membrane. The enzyme catalyses Exolytic cleavage of the (1-&gt;4)-beta-glycosidic linkage between N-acetylmuramic acid (MurNAc) and N-acetylglucosamine (GlcNAc) residues in peptidoglycan, from either the reducing or the non-reducing ends of the peptidoglycan chains, with concomitant formation of a 1,6-anhydrobond in the MurNAc residue.. Its function is as follows. Murein-degrading enzyme that degrades murein glycan strands and insoluble, high-molecular weight murein sacculi, with the concomitant formation of a 1,6-anhydromuramoyl product. Lytic transglycosylases (LTs) play an integral role in the metabolism of the peptidoglycan (PG) sacculus. Their lytic action creates space within the PG sacculus to allow for its expansion as well as for the insertion of various structures such as secretion systems and flagella. The polypeptide is Membrane-bound lytic murein transglycosylase F (Pseudomonas putida (strain W619)).